Consider the following 492-residue polypeptide: MIMSSTMSTEAALVPNESVFDTVSSFNEDDANYSVLDLYDDDDEGDDSSTVERKEILTTRELEKAKAFTSLIMADPENFDRYGFSKKGYFISQEEYDKWWTEYNRYTERRKKKWENFLLKNKIELHNDNPLVYPARTDELSKFVRKGIPAEWRGNAWWYFAGGQRQLDANVGVYDRLKSDCREGAVSGKDMEAIERDLYRTFPDNIHFHKESFQNGEPAIIRSLRRVLMAFSVYDKTIGYCQSMNFLVGLLLLFMEEEKAFWMLVIITGKYLPGVYESDLEGANVDQGVLVLCIKEYLPEIWSHIESSYMNGNGSTDQISGPASGEEYLCRLPTLTLCTASWFMSCFVGVVPIETTLRIWDCLFYEESHFLFKVALGILKLSESEFLESKSQKLFRQYSSYTFGGSNDSDSTFKRLKNKIKTQEEADMEILQVIQNFPKRLLNPNDIFEKVLMKKKVALNGITQEKIDRGREYVAMARNRQRASSRPKERRK.

The region spanning 147 to 367 is the Rab-GAP TBC domain; it reads GIPAEWRGNA…RIWDCLFYEE (221 aa).

The protein localises to the cytoplasm. The protein resides in the bud. It is found in the bud neck. Functionally, regulates exocytosis by functioning as a GAP for SEC4. Also required for efficient polarization of the actin patches. The chain is GTPase-activating protein MSB4 (MSB4) from Saccharomyces cerevisiae (strain ATCC 204508 / S288c) (Baker's yeast).